Reading from the N-terminus, the 147-residue chain is uncharacterized protein (147 aa).

In terms of domain architecture, Rhodanese spans 50–140; that stretch reads NQKKAIIVDT…WNSENLPTTF (91 aa).

This is an uncharacterized protein from Buchnera aphidicola subsp. Schizaphis graminum (strain Sg).